The following is a 105-amino-acid chain: Oxytocin-neurophysin 1 (105 aa).

A disulfide bridge links Cys-1 with Cys-6. At Gly-9 the chain carries Glycine amide. Cystine bridges form between Cys-22–Cys-66, Cys-25–Cys-39, Cys-33–Cys-56, Cys-40–Cys-46, Cys-73–Cys-85, Cys-79–Cys-97, and Cys-86–Cys-91.

This sequence belongs to the vasopressin/oxytocin family. In terms of assembly, interacts with oxytocin receptor (Ki=1.5 nM). Interacts with vasopressin V1aR/AVPR1A (Ki=37 nM), V1bR/AVPR1B (Ki=222 nM), and V2R/AVPR2 receptors (Ki=823 nM).

It is found in the secreted. Neurophysin 1 specifically binds oxytocin. Its function is as follows. Oxytocin causes contraction of the smooth muscle of the uterus and of the mammary gland. Acts by binding to oxytocin receptor (OXTR). This Equus caballus (Horse) protein is Oxytocin-neurophysin 1 (OXT).